The chain runs to 486 residues: Membrane-bound lytic murein transglycosylase F (486 aa).

The N-terminal stretch at 1 to 29 (MFSPTALRPRYAKWLIATGLFLMLSGCVD) is a signal peptide. The interval 30–267 (KPNTLERVKE…RLKDRYYGHV (238 aa)) is non-LT domain. The LT domain stretch occupies residues 268 to 486 (DVLGYMGATT…SKPAQEPAPL (219 aa)). E314 is an active-site residue.

It in the N-terminal section; belongs to the bacterial solute-binding protein 3 family. In the C-terminal section; belongs to the transglycosylase Slt family.

The protein localises to the cell outer membrane. It catalyses the reaction Exolytic cleavage of the (1-&gt;4)-beta-glycosidic linkage between N-acetylmuramic acid (MurNAc) and N-acetylglucosamine (GlcNAc) residues in peptidoglycan, from either the reducing or the non-reducing ends of the peptidoglycan chains, with concomitant formation of a 1,6-anhydrobond in the MurNAc residue.. In terms of biological role, murein-degrading enzyme that degrades murein glycan strands and insoluble, high-molecular weight murein sacculi, with the concomitant formation of a 1,6-anhydromuramoyl product. Lytic transglycosylases (LTs) play an integral role in the metabolism of the peptidoglycan (PG) sacculus. Their lytic action creates space within the PG sacculus to allow for its expansion as well as for the insertion of various structures such as secretion systems and flagella. This chain is Membrane-bound lytic murein transglycosylase F, found in Pseudomonas fluorescens (strain Pf0-1).